Here is a 371-residue protein sequence, read N- to C-terminus: 4-hydroxy-3-methylbut-2-en-1-yl diphosphate synthase (flavodoxin) (371 aa).

[4Fe-4S] cluster contacts are provided by Cys-268, Cys-271, Cys-303, and Glu-310.

This sequence belongs to the IspG family. It depends on [4Fe-4S] cluster as a cofactor.

It catalyses the reaction (2E)-4-hydroxy-3-methylbut-2-enyl diphosphate + oxidized [flavodoxin] + H2O + 2 H(+) = 2-C-methyl-D-erythritol 2,4-cyclic diphosphate + reduced [flavodoxin]. The protein operates within isoprenoid biosynthesis; isopentenyl diphosphate biosynthesis via DXP pathway; isopentenyl diphosphate from 1-deoxy-D-xylulose 5-phosphate: step 5/6. In terms of biological role, converts 2C-methyl-D-erythritol 2,4-cyclodiphosphate (ME-2,4cPP) into 1-hydroxy-2-methyl-2-(E)-butenyl 4-diphosphate. This Macrococcus caseolyticus (strain JCSC5402) (Macrococcoides caseolyticum) protein is 4-hydroxy-3-methylbut-2-en-1-yl diphosphate synthase (flavodoxin).